The following is a 2325-amino-acid chain: Centriolin (2325 aa).

Residues 1–33 (MKKGSQQKIFSKAKIPSSSHSPIPSSMSNMRSR) form a disordered region. Low complexity predominate over residues 16-33 (PSSSHSPIPSSMSNMRSR). LRR repeat units follow at residues 126 to 147 (KLEVLNLSYNLIGKIEKLDKLL), 148 to 169 (KLRELNLSYNKISKIEGIENMC), 170 to 191 (NLQKLNLAGNEIEHIPVWLGKK), and 194 to 215 (SLRVLNLKGNKISSLQDISKLK). An LRRCT domain is found at 228-266 (NPVVTLPHYLQFTIFHLRSLESLEGQPVTTQDRQEAFER). 2 coiled-coil regions span residues 267–343 (FSLE…IELT) and 435–799 (LDTQ…LNHV). Ser831 is modified (phosphoserine). Positions 851 to 1101 (LARSKWERDE…ARLQNVLDLT (251 aa)) form a coiled coil. The disordered stretch occupies residues 1150–1241 (PSSKVSSHSS…DQEEPPFVPP (92 aa)). The segment covering 1224 to 1235 (SQEESELDDQEE) has biased composition (acidic residues). Residues 1317–2255 (EHHNLENEVS…DRLKAQLRHC (939 aa)) adopt a coiled-coil conformation. At Ser1475 the chain carries Phosphoserine. Positions 1948 to 2118 (MMFQRLQKER…ELVAQDNHER (171 aa)) are required for centrosome localization. The interval 1985–2325 (QKSKLDQVLS…QNQEKNASAR (341 aa)) is sufficient for interaction with HOOK2. The interval 2288-2325 (VTSTSADSASSPSLSQLESSLTEDSQLGQNQEKNASAR) is disordered. Residues 2290 to 2314 (STSADSASSPSLSQLESSLTEDSQL) are compositionally biased toward low complexity. Positions 2315-2325 (GQNQEKNASAR) are enriched in polar residues.

In terms of assembly, interacts with HOOK2. Interacts with EXOC6 and SNAPIN. Associates with the exocyst complex. As to expression, widely expressed with highest levels in testis and trachea.

Its subcellular location is the cytoplasm. It localises to the cytoskeleton. The protein localises to the microtubule organizing center. It is found in the centrosome. The protein resides in the midbody. Its subcellular location is the midbody ring. Its function is as follows. Involved in cell cycle progression and cytokinesis. During the late steps of cytokinesis, anchors exocyst and SNARE complexes at the midbody, thereby allowing secretory vesicle-mediated abscission. In Homo sapiens (Human), this protein is Centriolin (CNTRL).